The chain runs to 187 residues: Putative type I specificity subunit S.MpnORF289P N-terminus (187 aa).

It belongs to the type-I restriction system S methylase family. As to quaternary structure, the methyltransferase is composed of M and S polypeptides.

In terms of biological role, the N-terminal section of a specificity (S) subunit of a type I methyltransferase (MTase); this subunit dictates DNA sequence specificity. The single R subunit has multiple frameshifts and is probably not expressed. This Mycoplasma pneumoniae (strain ATCC 29342 / M129 / Subtype 1) (Mycoplasmoides pneumoniae) protein is Putative type I specificity subunit S.MpnORF289P N-terminus.